Reading from the N-terminus, the 368-residue chain is Aminomethyltransferase (368 aa).

Belongs to the GcvT family. The glycine cleavage system is composed of four proteins: P, T, L and H.

It carries out the reaction N(6)-[(R)-S(8)-aminomethyldihydrolipoyl]-L-lysyl-[protein] + (6S)-5,6,7,8-tetrahydrofolate = N(6)-[(R)-dihydrolipoyl]-L-lysyl-[protein] + (6R)-5,10-methylene-5,6,7,8-tetrahydrofolate + NH4(+). Functionally, the glycine cleavage system catalyzes the degradation of glycine. This Thermoanaerobacter sp. (strain X514) protein is Aminomethyltransferase.